We begin with the raw amino-acid sequence, 550 residues long: Dihydroxy-acid dehydratase (550 aa).

Position 78 (Asp-78) interacts with Mg(2+). Residue Cys-119 participates in [2Fe-2S] cluster binding. Mg(2+) is bound by residues Asp-120 and Lys-121. Lys-121 is subject to N6-carboxylysine. Position 191 (Cys-191) interacts with [2Fe-2S] cluster. Glu-440 is a Mg(2+) binding site. Ser-466 acts as the Proton acceptor in catalysis.

This sequence belongs to the IlvD/Edd family. Homodimer. Requires [2Fe-2S] cluster as cofactor. It depends on Mg(2+) as a cofactor.

It catalyses the reaction (2R)-2,3-dihydroxy-3-methylbutanoate = 3-methyl-2-oxobutanoate + H2O. The enzyme catalyses (2R,3R)-2,3-dihydroxy-3-methylpentanoate = (S)-3-methyl-2-oxopentanoate + H2O. It participates in amino-acid biosynthesis; L-isoleucine biosynthesis; L-isoleucine from 2-oxobutanoate: step 3/4. Its pathway is amino-acid biosynthesis; L-valine biosynthesis; L-valine from pyruvate: step 3/4. In terms of biological role, functions in the biosynthesis of branched-chain amino acids. Catalyzes the dehydration of (2R,3R)-2,3-dihydroxy-3-methylpentanoate (2,3-dihydroxy-3-methylvalerate) into 2-oxo-3-methylpentanoate (2-oxo-3-methylvalerate) and of (2R)-2,3-dihydroxy-3-methylbutanoate (2,3-dihydroxyisovalerate) into 2-oxo-3-methylbutanoate (2-oxoisovalerate), the penultimate precursor to L-isoleucine and L-valine, respectively. This Methanococcus maripaludis (strain DSM 14266 / JCM 13030 / NBRC 101832 / S2 / LL) protein is Dihydroxy-acid dehydratase.